Reading from the N-terminus, the 1551-residue chain is MSIEKVPILGKETIHVGYGIADHIVREVIANLASSTYVIVTDTNMARTPQYSKLTDDFKTNLSEKRPESRLLTYCVSPGENNKNRATKAAVEDFLLQQGCTRDTVILAVGGGVIGDMIGFVAATFMRGVRVVQVPTTLLAMVDSSVGGKTAIDTPLGKNFIGAFHQPEYVFCDVSFLETLPARQFINGMAEVVKTAAIWNEEEFTRLENFSKKFLSVVTSKKPDLQSIKAELVKTVLESVRVKAGVVSSDEKEAGLRNLLNFGHTIGHAIEAVLTPEALHGECVSIGMIKEAELSRYLGILPPVAVARLSKCLVAYGLPVSIDDKEFLKKVGPKRHYVEIDILLKKMAIDKKNDGSKIRCVLLEKIGKCYQLKAHQVSKQDLSFVLTDEVLVHPFTNPPKENIIVPPGSKSISNRALILAALGNGTVRVKNLLHSDDTKHMLDAVASLKGAEISTEDNGETIVVKGNGGNLVTSGEELYLGNAGTASRFLTTVASLVGKSQASDDVILTGNARMQERPIGPLVDALGSNGSEIEYLNKQGSLPLKISAGNGLKGGRIELAATISSQYVSSILMCAPYAKEPVTLALVGGKPISQLYIDMTCAMMKSFGIEVTKSTTEEYTYHIPKGTYKNPSEYVIESDASSATYPLAFAAMTGTSCTIPNIGSSSLQGDAKFAVDVLKPMGCKVEQTTTSTTVTGPPRGHLKPLPHVDMEPMTDAFLTASVVAAVAKGGSSTSITGIANQRVKECNRIEAMVTELAKFGVPANELPDGIEIHGIDIEDLKTPEISKRGVSSYDDHRVAMSFSLLAGLCKEPVLILERSTTGKTWPGWWDILHSKFKIELDGYEPPFNTDKHVDKSSDKSIIVIGMRGTGKSTLSEWLASFLGFKMLDMDKYLEEKLGTGIKSLIKAKGWEYFRQEEAIVAKECFTKFSKGYVLSTGGGIVEGEDARQQLKSYADNGGIVLHLHRDLDETVTFLAADTTRPAYSSEVQEVWLRREKWYHECSNYHFYSSHCSTEDEFNHLRRSFVNYIKLITGAERPVVPAGRSAAVVLTSPDLNEVVGDLESITIGADAVELRVDLFKDTSAEFVAAQIAVIRKHADLPIIYTVRTVSQGGKFPDENVDELKSLLLLGIRLGVAYVDLQLTAPNELIEEISSKKGFTRVIGTYQDINGELKWNNVEWKNKYNQGVSMNADIVRLVGKANSIQDNLDLENFKKQNTLKPLIAFNLGSQGKLSQVLNGTFTPISHKLLPNDEEFLTIGELNQTYFDIGGFTAKKFWVIGSPIEHSRSPNLHNAGYKALNLPYQFGRFEATDVDVVYDNLINKPDFGGLAITMPLKLDIMKFATKLSDAAETIGAVNTLIPIEGGYFGDNTDWVGISNSFIRAGVPPKSSSNGLVVGAGGTSRAAIYALHQMGCAKIYLVNRTAAKLEELVKSFPKDYNLEIVETEQQADKASKVSLAVSCIPADKPLDGEVLKKIERILSNGSEQSAGFKPTLLEASYKPRVTPIMKLTEEQYKWKVIPGVEMLVNQGDRQFKLHTGFTAPYEIIHRAVVEE.

The tract at residues 1-379 (MSIEKVPILG…YQLKAHQVSK (379 aa)) is 3-dehydroquinate synthase. Residues 42–44 (DTN), 80–83 (ENNK), 111–113 (GGV), and D116 contribute to the NAD(+) site. R127 contacts 7-phospho-2-dehydro-3-deoxy-D-arabino-heptonate. 136–137 (TT) contacts NAD(+). 7-phospho-2-dehydro-3-deoxy-D-arabino-heptonate-binding residues include D143 and K149. K158 is an NAD(+) binding site. N159 is a 7-phospho-2-dehydro-3-deoxy-D-arabino-heptonate binding site. NAD(+) contacts are provided by residues 176–179 (FLET) and N187. Position 191 (E191) interacts with Zn(2+). 7-phospho-2-dehydro-3-deoxy-D-arabino-heptonate-binding positions include 191–194 (EVVK) and K243. E253 (proton acceptor; for 3-dehydroquinate synthase activity) is an active-site residue. Residues 257-261 (RNLLN) and H264 each bind 7-phospho-2-dehydro-3-deoxy-D-arabino-heptonate. Residue H264 participates in Zn(2+) binding. H268 serves as the catalytic Proton acceptor; for 3-dehydroquinate synthase activity. Residues H280 and K351 each contribute to the 7-phospho-2-dehydro-3-deoxy-D-arabino-heptonate site. H280 serves as a coordination point for Zn(2+). The tract at residues 392–838 (VHPFTNPPKE…WDILHSKFKI (447 aa)) is EPSP synthase. The interval 858 to 1048 (DKSIIVIGMR…VPAGRSAAVV (191 aa)) is shikimate kinase. 865–872 (GMRGTGKS) is a binding site for ATP. Positions 1049 to 1258 (LTSPDLNEVV…NDEEFLTIGE (210 aa)) are 3-dehydroquinase. The Schiff-base intermediate with substrate; for 3-dehydroquinate dehydratase activity role is filled by R1194. Residues 1271-1551 (AKKFWVIGSP…EIIHRAVVEE (281 aa)) are shikimate dehydrogenase.

In the N-terminal section; belongs to the sugar phosphate cyclases superfamily. Dehydroquinate synthase family. The protein in the 2nd section; belongs to the EPSP synthase family. It in the 3rd section; belongs to the shikimate kinase family. This sequence in the 4th section; belongs to the type-I 3-dehydroquinase family. In the C-terminal section; belongs to the shikimate dehydrogenase family. Homodimer. The cofactor is Zn(2+).

Its subcellular location is the cytoplasm. It catalyses the reaction 7-phospho-2-dehydro-3-deoxy-D-arabino-heptonate = 3-dehydroquinate + phosphate. The catalysed reaction is 3-dehydroquinate = 3-dehydroshikimate + H2O. The enzyme catalyses shikimate + NADP(+) = 3-dehydroshikimate + NADPH + H(+). It carries out the reaction shikimate + ATP = 3-phosphoshikimate + ADP + H(+). It catalyses the reaction 3-phosphoshikimate + phosphoenolpyruvate = 5-O-(1-carboxyvinyl)-3-phosphoshikimate + phosphate. The protein operates within metabolic intermediate biosynthesis; chorismate biosynthesis; chorismate from D-erythrose 4-phosphate and phosphoenolpyruvate: step 2/7. Its pathway is metabolic intermediate biosynthesis; chorismate biosynthesis; chorismate from D-erythrose 4-phosphate and phosphoenolpyruvate: step 3/7. It functions in the pathway metabolic intermediate biosynthesis; chorismate biosynthesis; chorismate from D-erythrose 4-phosphate and phosphoenolpyruvate: step 4/7. It participates in metabolic intermediate biosynthesis; chorismate biosynthesis; chorismate from D-erythrose 4-phosphate and phosphoenolpyruvate: step 5/7. The protein operates within metabolic intermediate biosynthesis; chorismate biosynthesis; chorismate from D-erythrose 4-phosphate and phosphoenolpyruvate: step 6/7. Its function is as follows. The AROM polypeptide catalyzes 5 consecutive enzymatic reactions in prechorismate polyaromatic amino acid biosynthesis. The protein is Pentafunctional AROM polypeptide of Candida albicans (strain SC5314 / ATCC MYA-2876) (Yeast).